The following is a 489-amino-acid chain: Capsid protein (489 aa).

Positions 79–144 (GETSEEESDS…QPKTIPGQKQ (66 aa)) are disordered. Over residues 81-94 (TSEEESDSGEEPEF) the composition is skewed to acidic residues. The span at 95–110 (EQVRMDRTGGTEIPKE) shows a compositional bias: basic and acidic residues. The short motif at 122-125 (RKRK) is the Nuclear localization signal element. Positions 135 to 144 (QPKTIPGQKQ) are enriched in polar residues. The CCHC-type zinc-finger motif lies at 412–429 (CRCWICNIEGHYANECPN). The tract at residues 467–489 (EEEEETSTEESDGSSTSEDSDSD) is disordered.

The protein belongs to the caulimoviridae capsid protein family. Interacts (via nuclear localization signal) with host importin alpha.

Its subcellular location is the virion. It is found in the host nucleus. Self assembles to form an icosahedral capsid, about 50 nm in diameter, nm, composed of 420 subunits of the viral capsid protein. The capsid encapsulates the genomic dsDNA. Following virus entry into host cell, provides nuclear import of the viral genome. Virus particles do not enter the nucleus, but dock at the nuclear membrane through the interaction with host importins. In Arabidopsis thaliana (Mouse-ear cress), this protein is Capsid protein.